The primary structure comprises 123 residues: Small ribosomal subunit protein uS12 (123 aa).

The tract at residues 1–31 is disordered; sequence MPTIQQLVRKGRHSKKAKVATAGLKGSPQRR. The span at 9-18 shows a compositional bias: basic residues; sequence RKGRHSKKAK. At Asp-89 the chain carries 3-methylthioaspartic acid.

The protein belongs to the universal ribosomal protein uS12 family. In terms of assembly, part of the 30S ribosomal subunit. Contacts proteins S8 and S17. May interact with IF1 in the 30S initiation complex.

In terms of biological role, with S4 and S5 plays an important role in translational accuracy. Its function is as follows. Interacts with and stabilizes bases of the 16S rRNA that are involved in tRNA selection in the A site and with the mRNA backbone. Located at the interface of the 30S and 50S subunits, it traverses the body of the 30S subunit contacting proteins on the other side and probably holding the rRNA structure together. The combined cluster of proteins S8, S12 and S17 appears to hold together the shoulder and platform of the 30S subunit. The polypeptide is Small ribosomal subunit protein uS12 (Corynebacterium aurimucosum (strain ATCC 700975 / DSM 44827 / CIP 107346 / CN-1) (Corynebacterium nigricans)).